Consider the following 209-residue polypeptide: Large ribosomal subunit protein uL3 (209 aa).

Residues N127 to S153 form a disordered region.

It belongs to the universal ribosomal protein uL3 family. As to quaternary structure, part of the 50S ribosomal subunit. Forms a cluster with proteins L14 and L19.

One of the primary rRNA binding proteins, it binds directly near the 3'-end of the 23S rRNA, where it nucleates assembly of the 50S subunit. The polypeptide is Large ribosomal subunit protein uL3 (Clostridium perfringens (strain SM101 / Type A)).